The chain runs to 356 residues: tRNA N6-adenosine threonylcarbamoyltransferase (356 aa).

His-115 and His-119 together coordinate Fe cation. Substrate-binding positions include 138 to 142 (LVSGG), Asp-171, Gly-184, and Asn-283. Residue Asp-311 participates in Fe cation binding.

Belongs to the KAE1 / TsaD family. Fe(2+) serves as cofactor.

The protein localises to the cytoplasm. It carries out the reaction L-threonylcarbamoyladenylate + adenosine(37) in tRNA = N(6)-L-threonylcarbamoyladenosine(37) in tRNA + AMP + H(+). In terms of biological role, required for the formation of a threonylcarbamoyl group on adenosine at position 37 (t(6)A37) in tRNAs that read codons beginning with adenine. Is involved in the transfer of the threonylcarbamoyl moiety of threonylcarbamoyl-AMP (TC-AMP) to the N6 group of A37, together with TsaE and TsaB. TsaD likely plays a direct catalytic role in this reaction. The protein is tRNA N6-adenosine threonylcarbamoyltransferase of Prochlorococcus marinus (strain MIT 9313).